A 273-amino-acid chain; its full sequence is 4-hydroxy-tetrahydrodipicolinate reductase (273 aa).

NAD(+) is bound by residues 12–17 and glutamate 38; that span reads GAGGRM. NADP(+) is bound at residue arginine 39. Residues 102-104 and 126-129 each bind NAD(+); these read GTT and AANF. The active-site Proton donor/acceptor is histidine 159. Histidine 160 provides a ligand contact to (S)-2,3,4,5-tetrahydrodipicolinate. Residue lysine 163 is the Proton donor of the active site. Position 169–170 (169–170) interacts with (S)-2,3,4,5-tetrahydrodipicolinate; sequence GT.

It belongs to the DapB family. In terms of assembly, homotetramer.

It is found in the cytoplasm. It carries out the reaction (S)-2,3,4,5-tetrahydrodipicolinate + NAD(+) + H2O = (2S,4S)-4-hydroxy-2,3,4,5-tetrahydrodipicolinate + NADH + H(+). The catalysed reaction is (S)-2,3,4,5-tetrahydrodipicolinate + NADP(+) + H2O = (2S,4S)-4-hydroxy-2,3,4,5-tetrahydrodipicolinate + NADPH + H(+). It functions in the pathway amino-acid biosynthesis; L-lysine biosynthesis via DAP pathway; (S)-tetrahydrodipicolinate from L-aspartate: step 4/4. In terms of biological role, catalyzes the conversion of 4-hydroxy-tetrahydrodipicolinate (HTPA) to tetrahydrodipicolinate. This Escherichia coli O157:H7 protein is 4-hydroxy-tetrahydrodipicolinate reductase.